Here is a 117-residue protein sequence, read N- to C-terminus: MTRAKSGKISKNRHKKILKFAKGYRGRANSCFRVAIEKVEKALQYAYRDRRNRKRDFRGLWIQRINAAVREHGLVYSQFMGALKKTEIDIDRKVLAELAVNNSDGFVSIVEKAKAHI.

It belongs to the bacterial ribosomal protein bL20 family.

Its function is as follows. Binds directly to 23S ribosomal RNA and is necessary for the in vitro assembly process of the 50S ribosomal subunit. It is not involved in the protein synthesizing functions of that subunit. The sequence is that of Large ribosomal subunit protein bL20 from Rickettsia peacockii (strain Rustic).